Reading from the N-terminus, the 578-residue chain is Proline--tRNA ligase (578 aa).

Belongs to the class-II aminoacyl-tRNA synthetase family. ProS type 1 subfamily. Homodimer.

Its subcellular location is the cytoplasm. It catalyses the reaction tRNA(Pro) + L-proline + ATP = L-prolyl-tRNA(Pro) + AMP + diphosphate. Functionally, catalyzes the attachment of proline to tRNA(Pro) in a two-step reaction: proline is first activated by ATP to form Pro-AMP and then transferred to the acceptor end of tRNA(Pro). As ProRS can inadvertently accommodate and process non-cognate amino acids such as alanine and cysteine, to avoid such errors it has two additional distinct editing activities against alanine. One activity is designated as 'pretransfer' editing and involves the tRNA(Pro)-independent hydrolysis of activated Ala-AMP. The other activity is designated 'posttransfer' editing and involves deacylation of mischarged Ala-tRNA(Pro). The misacylated Cys-tRNA(Pro) is not edited by ProRS. In Burkholderia pseudomallei (strain K96243), this protein is Proline--tRNA ligase.